We begin with the raw amino-acid sequence, 395 residues long: Acetate kinase (395 aa).

Mg(2+) is bound at residue asparagine 7. Lysine 14 contributes to the ATP binding site. Arginine 92 contacts substrate. Aspartate 149 serves as the catalytic Proton donor/acceptor. Residues 207–211, 282–284, and 329–333 contribute to the ATP site; these read HLGNG, DMR, and GIGEN. Glutamate 382 provides a ligand contact to Mg(2+).

It belongs to the acetokinase family. In terms of assembly, homodimer. The cofactor is Mg(2+). It depends on Mn(2+) as a cofactor.

The protein resides in the cytoplasm. The catalysed reaction is acetate + ATP = acetyl phosphate + ADP. Its pathway is metabolic intermediate biosynthesis; acetyl-CoA biosynthesis; acetyl-CoA from acetate: step 1/2. Functionally, catalyzes the formation of acetyl phosphate from acetate and ATP. Can also catalyze the reverse reaction. The chain is Acetate kinase from Brachyspira hyodysenteriae (strain ATCC 49526 / WA1).